The sequence spans 341 residues: uncharacterized protein (341 aa).

The stretch at 153-179 (AYTLSEKVMNAEREAEETRETIIREAH) forms a coiled coil. Residues 319 to 335 (EQLQNPAPESAPSTSKT) are compositionally biased toward polar residues. A disordered region spans residues 319–341 (EQLQNPAPESAPSTSKTLRSKNP).

This is an uncharacterized protein from Coxiella burnetii (strain RSA 493 / Nine Mile phase I).